A 425-amino-acid chain; its full sequence is Glucose-1-phosphate adenylyltransferase (425 aa).

Alpha-D-glucose 1-phosphate contacts are provided by residues Tyr110, Gly175, 190 to 191 (EK), and Ser208.

The protein belongs to the bacterial/plant glucose-1-phosphate adenylyltransferase family. As to quaternary structure, homotetramer.

The enzyme catalyses alpha-D-glucose 1-phosphate + ATP + H(+) = ADP-alpha-D-glucose + diphosphate. It participates in glycan biosynthesis; glycogen biosynthesis. Its function is as follows. Involved in the biosynthesis of ADP-glucose, a building block required for the elongation reactions to produce glycogen. Catalyzes the reaction between ATP and alpha-D-glucose 1-phosphate (G1P) to produce pyrophosphate and ADP-Glc. The chain is Glucose-1-phosphate adenylyltransferase from Nitrosospira multiformis (strain ATCC 25196 / NCIMB 11849 / C 71).